The primary structure comprises 377 residues: Stimulator of interferon genes protein (377 aa).

Residues 1 to 21 (MRRAEENNGFGTIPKRRNQHT) are Cytoplasmic-facing. A helical transmembrane segment spans residues 22 to 42 (PFYASIGMIVVIIVAFTSYHI). The Extracellular segment spans residues 43–57 (TSYGDDRNRAMRQYS). Residues 58 to 80 (FTFSLAYLAFLVGELLRRCCLFA) traverse the membrane as a helical segment. At 81-101 (EEYRHIETRYNGSLKKAIQTT) the chain is on the cytoplasmic side. A helical membrane pass occupies residues 102-122 (FSFGHNNVLFVASLLFFVVFV). Over 123-154 (ASNDPNGSSSVIQGNSTAEPHTEMRQTSGWQG) the chain is Extracellular. A helical membrane pass occupies residues 155 to 175 (LWGQFIISALLTPLVVHLLGL). The Cytoplasmic portion of the chain corresponds to 176-377 (RELSKVEESQ…LKDSELEIGG (202 aa)). 2',3'-cGAMP is bound by residues Y206, R272, 278 to 279 (RH), and T303. 3',3'-c-di-GMP is bound by residues Y206, R272, R278, and 300–303 (EYAT).

Belongs to the TMEM173 family. As to quaternary structure, homodimer.

The protein resides in the endoplasmic reticulum membrane. Functionally, sensor of cytosolic DNA from bacteria and viruses that promotes autophagy. Acts by recognizing and binding cyclic GMP-AMP (cGAMP), a messenger produced by CGAS in response to DNA in the cytosol. Following cGAMP-binding, promotes the formation of autophagosomes, leading to target cytosolic DNA for degradation by the lysosome. Exhibits guanine base-specific ligand recognition. Binds 3'-3'linked cGAMP, 2'-3' linked cGAMP and 3'-3' linked c-di-GMP with much greater affinity as compared to 3'-3' linked c-di-AMP. Lacks the C-terminal tail (CTT) found in mammalian orthologs which is essential for interferon signaling. This is Stimulator of interferon genes protein from Nematostella vectensis (Starlet sea anemone).